The primary structure comprises 119 residues: Membrane-anchored ubiquitin-fold protein 3 (119 aa).

The region spanning 8 to 76 is the Ubiquitin-like domain; sequence IEVKFRLFDG…NNRTLAESRV (69 aa). Position 116 is a cysteine methyl ester (Cys-116). Residue Cys-116 is the site of S-geranylgeranyl cysteine attachment. Positions 117–119 are cleaved as a propeptide — removed in mature form; sequence TIL.

It is found in the cell membrane. May serve as docking site to facilitate the association of other proteins to the plasma membrane. In Oryza sativa subsp. japonica (Rice), this protein is Membrane-anchored ubiquitin-fold protein 3 (MUB3).